A 524-amino-acid chain; its full sequence is Glucose-6-phosphate isomerase (524 aa).

Residue glutamate 322 is the Proton donor of the active site. Residues histidine 351 and lysine 453 contribute to the active site.

This sequence belongs to the GPI family.

It localises to the cytoplasm. It catalyses the reaction alpha-D-glucose 6-phosphate = beta-D-fructose 6-phosphate. The protein operates within carbohydrate biosynthesis; gluconeogenesis. Its pathway is carbohydrate degradation; glycolysis; D-glyceraldehyde 3-phosphate and glycerone phosphate from D-glucose: step 2/4. Catalyzes the reversible isomerization of glucose-6-phosphate to fructose-6-phosphate. The protein is Glucose-6-phosphate isomerase of Prochlorococcus marinus (strain NATL2A).